We begin with the raw amino-acid sequence, 312 residues long: Ornithine carbamoyltransferase (312 aa).

Carbamoyl phosphate is bound by residues 50–53 (STRT), Gln77, Arg101, and 128–131 (HPCQ). L-ornithine contacts are provided by residues Asn160, Asp224, and 228-229 (SM). Residues 264–265 (CL) and Arg292 each bind carbamoyl phosphate.

It belongs to the aspartate/ornithine carbamoyltransferase superfamily. OTCase family.

It localises to the cytoplasm. It carries out the reaction carbamoyl phosphate + L-ornithine = L-citrulline + phosphate + H(+). It participates in amino-acid biosynthesis; L-arginine biosynthesis; L-arginine from L-ornithine and carbamoyl phosphate: step 1/3. Functionally, reversibly catalyzes the transfer of the carbamoyl group from carbamoyl phosphate (CP) to the N(epsilon) atom of ornithine (ORN) to produce L-citrulline. This is Ornithine carbamoyltransferase from Leifsonia xyli subsp. xyli (strain CTCB07).